The following is a 141-amino-acid chain: Nucleoside triphosphatase NudI (141 aa).

The 141-residue stretch at 1–141 (MRQRTIVCPL…RKTLRLKGLL (141 aa)) folds into the Nudix hydrolase domain. The Nudix box motif lies at 38-59 (GGVEPGERIEEALRREIREELG).

It belongs to the Nudix hydrolase family. NudI subfamily. As to quaternary structure, monomer. Mg(2+) serves as cofactor.

It catalyses the reaction a ribonucleoside 5'-triphosphate + H2O = a ribonucleoside 5'-phosphate + diphosphate + H(+). It carries out the reaction a 2'-deoxyribonucleoside 5'-triphosphate + H2O = a 2'-deoxyribonucleoside 5'-phosphate + diphosphate + H(+). The catalysed reaction is dUTP + H2O = dUMP + diphosphate + H(+). The enzyme catalyses dTTP + H2O = dTMP + diphosphate + H(+). It catalyses the reaction dCTP + H2O = dCMP + diphosphate + H(+). Its function is as follows. Catalyzes the hydrolysis of nucleoside triphosphates, with a preference for pyrimidine deoxynucleoside triphosphates (dUTP, dTTP and dCTP). This Escherichia coli (strain ATCC 8739 / DSM 1576 / NBRC 3972 / NCIMB 8545 / WDCM 00012 / Crooks) protein is Nucleoside triphosphatase NudI.